The chain runs to 148 residues: Large ribosomal subunit protein bL9 (148 aa).

Belongs to the bacterial ribosomal protein bL9 family.

Binds to the 23S rRNA. This chain is Large ribosomal subunit protein bL9, found in Pseudomonas fluorescens (strain ATCC BAA-477 / NRRL B-23932 / Pf-5).